A 64-amino-acid chain; its full sequence is Large ribosomal subunit protein bL33c (64 aa).

It belongs to the bacterial ribosomal protein bL33 family.

The protein localises to the plastid. It is found in the chloroplast. The protein is Large ribosomal subunit protein bL33c (rpl33) of Cyanidium caldarium (Red alga).